Reading from the N-terminus, the 380-residue chain is 3-isopropylmalate dehydrogenase (380 aa).

Gly79–Glu90 is a binding site for NAD(+). Arg97, Arg107, Arg136, and Asp229 together coordinate substrate. Positions 229, 254, and 258 each coordinate Mg(2+). An NAD(+)-binding site is contributed by Gly294–Asn306.

The protein belongs to the isocitrate and isopropylmalate dehydrogenases family. Homodimer. The cofactor is Mg(2+). Mn(2+) serves as cofactor.

The protein resides in the cytoplasm. It catalyses the reaction (2R,3S)-3-isopropylmalate + NAD(+) = 4-methyl-2-oxopentanoate + CO2 + NADH. It functions in the pathway amino-acid biosynthesis; L-leucine biosynthesis; L-leucine from 3-methyl-2-oxobutanoate: step 3/4. Catalyzes the oxidation of 3-carboxy-2-hydroxy-4-methylpentanoate (3-isopropylmalate) to 3-carboxy-4-methyl-2-oxopentanoate. The product decarboxylates to 4-methyl-2 oxopentanoate. The polypeptide is 3-isopropylmalate dehydrogenase (LEU2) (Hapsidospora chrysogena (Acremonium chrysogenum)).